The chain runs to 141 residues: MVHSQLPVAAPLRLLCALLLLPSATMIPGGLYPRSVTDPDVQEAAECAVQEYNALSANAYYYKQLRIVEAQSQVVTGAKYYLTMELMKTKCAKTTGKPKVYKEIQNCELPPKAQQEKLTCHFQVWSRPWLQKIELTKMSCN.

The first 26 residues, methionine 1–methionine 26, serve as a signal peptide directing secretion. The Cystatin domain maps to glycine 29–tryptophan 129. Positions glutamine 73–glycine 77 match the Secondary area of contact motif. Disulfide bonds link cysteine 91-cysteine 107 and cysteine 120-cysteine 140.

Belongs to the cystatin family. As to expression, expressed by the venom gland at an extremely low level (at protein level).

The protein localises to the secreted. Inhibits various C1 cysteine proteases including cathepsin L, papain and cathepsin B. This protein has no toxic activity and its function in the venom is unknown. It may play a role as a housekeeping or regulatory protein. This is Cystatin from Tropidechis carinatus (Australian rough-scaled snake).